Reading from the N-terminus, the 41-residue chain is U-megalopygitoxin(4)-Mo5 (41 aa).

An N-terminal signal peptide occupies residues 1–23 (MKCSLLLVVFAAMVALFAAGTNA).

This sequence belongs to the caterpillar 4 family. Expressed by the venom apparatus.

The protein localises to the secreted. Probable toxin. The sequence is that of U-megalopygitoxin(4)-Mo5 from Megalopyge opercularis (Southern flannel moth).